The sequence spans 90 residues: Acylphosphatase (90 aa).

The region spanning 5 to 90 is the Acylphosphatase-like domain; the sequence is GCKVIVSGIV…YQKTNDFIAC (86 aa). Catalysis depends on residues R20 and N38.

It belongs to the acylphosphatase family.

It catalyses the reaction an acyl phosphate + H2O = a carboxylate + phosphate + H(+). The polypeptide is Acylphosphatase (acyP) (Psychromonas ingrahamii (strain DSM 17664 / CCUG 51855 / 37)).